Consider the following 337-residue polypeptide: Dolichyl-phosphate beta-glucosyltransferase ALG5C (337 aa).

The Lumenal segment spans residues 1–6; it reads MNDLPP. Residues 7–27 form a helical membrane-spanning segment; sequence IANLISNILFVLLIITFLYAL. Over 28-337 the chain is Cytoplasmic; the sequence is CSRFVSDKTL…ADTPISDFEV (310 aa).

This sequence belongs to the glycosyltransferase 2 family.

The protein localises to the endoplasmic reticulum membrane. The enzyme catalyses a di-trans,poly-cis-dolichyl phosphate + UDP-alpha-D-glucose = a di-trans,poly-cis-dolichyl beta-D-glucosyl phosphate + UDP. It participates in protein modification; protein glycosylation. Its function is as follows. Dolichyl-phosphate beta-glucosyltransferase involved in the glycosylation of glycoproteins through the synthesis of dolichyl beta-D-glucosyl phosphate which serves as a sugar donor for transfer of three glucose residues to the Man-9-GlcNAc-2-PP-dolichol precursor to N-glycans. The polypeptide is Dolichyl-phosphate beta-glucosyltransferase ALG5C (Trichomonas vaginalis (strain ATCC PRA-98 / G3)).